The sequence spans 229 residues: Aminodeoxyfutalosine nucleosidase (229 aa).

The active-site Proton acceptor is glutamate 13. Substrate is bound by residues glycine 79, isoleucine 153, and 173-174; that span reads ME. The active-site Proton donor is the aspartate 197.

The protein belongs to the PNP/UDP phosphorylase family. As to quaternary structure, homodimer.

It carries out the reaction 6-amino-6-deoxyfutalosine + H2O = dehypoxanthine futalosine + adenine. It catalyses the reaction S-adenosyl-L-homocysteine + H2O = S-(5-deoxy-D-ribos-5-yl)-L-homocysteine + adenine. The enzyme catalyses S-methyl-5'-thioadenosine + H2O = 5-(methylsulfanyl)-D-ribose + adenine. The catalysed reaction is 5'-deoxyadenosine + H2O = 5-deoxy-D-ribose + adenine. Its pathway is quinol/quinone metabolism; menaquinone biosynthesis. The protein operates within amino-acid biosynthesis; L-methionine biosynthesis via salvage pathway; S-methyl-5-thio-alpha-D-ribose 1-phosphate from S-methyl-5'-thioadenosine (hydrolase route): step 1/2. In terms of biological role, catalyzes the direct conversion of aminodeoxyfutalosine (AFL) into dehypoxanthine futalosine (DHFL) and adenine via the hydrolysis of the N-glycosidic bond; this reaction seems to represent an essential step in the menaquinone biosynthesis pathway in Campylobacter species. Also catalyzes the hydrolysis of 5'-methylthioadenosine (MTA) to adenine and 5'-methylthioribose. Can also probably use S-adenosylhomocysteine (SAH) as substrate, leading to adenine and S-ribosylhomocysteine. These other activities highlight the tremendous versatility of the enzyme, which also plays key roles in S-adenosylmethionine recycling and in the biosynthesis of the quorum-sensing molecule autoinducer-2. Shows negligible activity with futalosine (FL) as substrate. The sequence is that of Aminodeoxyfutalosine nucleosidase (pfs) from Campylobacter jejuni subsp. jejuni serotype O:2 (strain ATCC 700819 / NCTC 11168).